A 505-amino-acid polypeptide reads, in one-letter code: Histidine ammonia-lyase (505 aa).

Residues 141-143 (ASG) constitute a cross-link (5-imidazolinone (Ala-Gly)). At S142 the chain carries 2,3-didehydroalanine (Ser).

Belongs to the PAL/histidase family. Contains an active site 4-methylidene-imidazol-5-one (MIO), which is formed autocatalytically by cyclization and dehydration of residues Ala-Ser-Gly.

The protein resides in the cytoplasm. It carries out the reaction L-histidine = trans-urocanate + NH4(+). The protein operates within amino-acid degradation; L-histidine degradation into L-glutamate; N-formimidoyl-L-glutamate from L-histidine: step 1/3. In Bacillus cereus (strain ZK / E33L), this protein is Histidine ammonia-lyase.